Consider the following 186-residue polypeptide: Bilin biosynthesis protein CpeZ (186 aa).

In terms of biological role, involved in the biosynthesis of bilin. The protein is Bilin biosynthesis protein CpeZ (cpeZ) of Synechococcus sp. (strain WH8020).